The chain runs to 671 residues: MHLPNVLQARFVQALEPLTDSPSDYAGMIRPAADPKFGDYQSNAAMPLAKRVGKTSRDVAAELVQNLNVTDLFEEPEVAGPGFINLRLKDSVLFDSIQQMLLDERVGVSKTTDPKKVIVDFSSPNVAKPMHVGHIRSTVIGDCLARTLRFYGEDVVTDNHLGDWGTQFGIIIYGYRNFGDPAKVAANPVPELSALYRLTNQLIEYQKAKQSLATMADKLATAKSDAKTAKEVSDQSESDENLKPKDKKKLRKNAEAATRRVASIEADMKSLKAKIDAVDSDTELSKLASEHSDVDVAVLRETAKLHEGDPENLALWKEFLPHCQDEINRIYDRLNVQFDHTLGESFYHDRLAGVVDHLTTLGLTTKSDGAICVFLEGFDSPMIIQKRDGAFLYATTDLATLQYRRDEFQPDEILYVVDSRQGEHFKKFFAMAEPLGMAEVQLVHVNFGTVLGPDGRPMKTRSGSLIGLESLLNDAVSRAKEVVCNPDRLATMDPPMGGEEQQQIAEIVGIGAIKYADLSHHRTSDYKFDVDKMVALEGNTATYVQYSYARTQSILRRASDGEGLPAFEQAIEQAAATQPMTFTHPNERSLALMLMRFEEAIEQVRLNYAPNALCDYLFETAKTYSSFNESCRVLGNDDPAVMQTRLALVVLTGRVLKKGLSLLGIDVAERM.

Positions 124 to 134 (PNVAKPMHVGH) match the 'HIGH' region motif. The segment at 223–254 (KSDAKTAKEVSDQSESDENLKPKDKKKLRKNA) is disordered. Over residues 224-233 (SDAKTAKEVS) the composition is skewed to basic and acidic residues.

It belongs to the class-I aminoacyl-tRNA synthetase family. In terms of assembly, monomer.

The protein resides in the cytoplasm. It carries out the reaction tRNA(Arg) + L-arginine + ATP = L-arginyl-tRNA(Arg) + AMP + diphosphate. This Rhodopirellula baltica (strain DSM 10527 / NCIMB 13988 / SH1) protein is Arginine--tRNA ligase.